Here is a 437-residue protein sequence, read N- to C-terminus: Aspartokinase (437 aa).

Belongs to the aspartokinase family.

The catalysed reaction is L-aspartate + ATP = 4-phospho-L-aspartate + ADP. Its pathway is amino-acid biosynthesis; L-lysine biosynthesis via DAP pathway; (S)-tetrahydrodipicolinate from L-aspartate: step 1/4. The protein operates within amino-acid biosynthesis; L-methionine biosynthesis via de novo pathway; L-homoserine from L-aspartate: step 1/3. It participates in amino-acid biosynthesis; L-threonine biosynthesis; L-threonine from L-aspartate: step 1/5. The polypeptide is Aspartokinase (lysC) (Chlamydia muridarum (strain MoPn / Nigg)).